The primary structure comprises 709 residues: Polyribonucleotide nucleotidyltransferase (709 aa).

Asp-490 and Asp-496 together coordinate Mg(2+). Residues 557–616 (PKVITMRVLPEKIPVIIGPSGKNIKKIIDETGVKIDLDQEGLVRIYAVDGESADKAKEMI) form the KH domain. An S1 motif domain is found at 626–694 (GEVYMGKVTR…EMGRAKVSLK (69 aa)).

Belongs to the polyribonucleotide nucleotidyltransferase family. The cofactor is Mg(2+).

Its subcellular location is the cytoplasm. The enzyme catalyses RNA(n+1) + phosphate = RNA(n) + a ribonucleoside 5'-diphosphate. Involved in mRNA degradation. Catalyzes the phosphorolysis of single-stranded polyribonucleotides processively in the 3'- to 5'-direction. This chain is Polyribonucleotide nucleotidyltransferase, found in Persephonella marina (strain DSM 14350 / EX-H1).